The chain runs to 657 residues: C4-dicarboxylate transport sensor protein DctS (657 aa).

The Cytoplasmic segment spans residues 1–26; that stretch reads MRDTTGGPAGAEVWTVPGLLGARKLD. Residues 27-51 form a helical membrane-spanning segment; sequence LLALIPLVAIVALMTLVGALLFAVA. Residues 52-252 lie on the Periplasmic side of the membrane; it reads QSDANRARAK…AYDAPDAFGN (201 aa). A helical transmembrane segment spans residues 253-273; the sequence is AALLAAIGALSVFAVLAMVVL. Residues 274 to 657 are Cytoplasmic-facing; sequence HRNALRRRMA…LPVPQEGAPA (384 aa). Residues 289–361 form the PAS domain; it reads AEMAFRRAME…ARQRQLIEGQ (73 aa). Positions 365-417 constitute a PAC domain; that stretch reads QAFETRFRRSDGSEIEVQVFEAPLIDAGGRHRGWMGSVIDITQAKQAARLARA. Residues 407-422 are inter-domain linker; it reads QAKQAARLARAQDESL. One can recognise a Histidine kinase domain in the interval 437-652; sequence TLAHELNQPL…VFTVTLPVPQ (216 aa). Histidine 440 is modified (phosphohistidine; by autocatalysis).

The protein resides in the cell inner membrane. The catalysed reaction is ATP + protein L-histidine = ADP + protein N-phospho-L-histidine.. Member of the two-component regulatory system DctS/DctR involved in the transport of C4-dicarboxylates. DctS functions as a membrane-associated protein kinase that phosphorylates DctR in response to environmental signals. This is C4-dicarboxylate transport sensor protein DctS (dctS) from Rhodobacter capsulatus (Rhodopseudomonas capsulata).